The sequence spans 200 residues: Pyridoxal 5'-phosphate synthase subunit PdxT (200 aa).

Position 52–54 (52–54) interacts with L-glutamine; that stretch reads GES. Catalysis depends on cysteine 84, which acts as the Nucleophile. Residues arginine 116 and 145–146 contribute to the L-glutamine site; that span reads IR. Active-site charge relay system residues include histidine 181 and glutamate 183.

It belongs to the glutaminase PdxT/SNO family. As to quaternary structure, in the presence of PdxS, forms a dodecamer of heterodimers. Only shows activity in the heterodimer.

It carries out the reaction aldehydo-D-ribose 5-phosphate + D-glyceraldehyde 3-phosphate + L-glutamine = pyridoxal 5'-phosphate + L-glutamate + phosphate + 3 H2O + H(+). The catalysed reaction is L-glutamine + H2O = L-glutamate + NH4(+). Its pathway is cofactor biosynthesis; pyridoxal 5'-phosphate biosynthesis. Catalyzes the hydrolysis of glutamine to glutamate and ammonia as part of the biosynthesis of pyridoxal 5'-phosphate. The resulting ammonia molecule is channeled to the active site of PdxS. The sequence is that of Pyridoxal 5'-phosphate synthase subunit PdxT from Saccharolobus solfataricus (strain ATCC 35092 / DSM 1617 / JCM 11322 / P2) (Sulfolobus solfataricus).